Consider the following 302-residue polypeptide: MSNRYSDFKTQLQGSMVALVTPMKANGEVDYPRLADLIDWQIEQGTHCLVAVGTTGESATLSMQEHSDVIHFFVKHVNGRVPVIAGTGANNTQEAIHLTSEAKAAGADCALLVAPYYNKPTQEGLYQHYKAISEAVDMPQMLYNVPGRTVVDIAQETVERLADFDNIVAIKDATGSVERGKLLIDALGDRIVVLSGDDGTALELMKHGAKGNISVTANIVPKAMSDVFSAALKGDFETAKKVHDSIEPLHKLMFVESSPIPVKYALNKMGKIEKGIRLPMVWLNEKFHDQVDAGLRAAGLID.

Thr55 contributes to the pyruvate binding site. The Proton donor/acceptor role is filled by Tyr143. Catalysis depends on Lys171, which acts as the Schiff-base intermediate with substrate. Ile213 lines the pyruvate pocket.

Belongs to the DapA family. As to quaternary structure, homotetramer; dimer of dimers.

The protein localises to the cytoplasm. The enzyme catalyses L-aspartate 4-semialdehyde + pyruvate = (2S,4S)-4-hydroxy-2,3,4,5-tetrahydrodipicolinate + H2O + H(+). The protein operates within amino-acid biosynthesis; L-lysine biosynthesis via DAP pathway; (S)-tetrahydrodipicolinate from L-aspartate: step 3/4. In terms of biological role, catalyzes the condensation of (S)-aspartate-beta-semialdehyde [(S)-ASA] and pyruvate to 4-hydroxy-tetrahydrodipicolinate (HTPA). In Psychrobacter sp. (strain PRwf-1), this protein is 4-hydroxy-tetrahydrodipicolinate synthase.